A 689-amino-acid chain; its full sequence is Glycine--tRNA ligase beta subunit (689 aa).

This sequence belongs to the class-II aminoacyl-tRNA synthetase family. As to quaternary structure, tetramer of two alpha and two beta subunits.

Its subcellular location is the cytoplasm. The enzyme catalyses tRNA(Gly) + glycine + ATP = glycyl-tRNA(Gly) + AMP + diphosphate. The sequence is that of Glycine--tRNA ligase beta subunit from Salmonella dublin (strain CT_02021853).